We begin with the raw amino-acid sequence, 100 residues long: Apolipoprotein C-II (100 aa).

The first 22 residues, 1–22 (MGSRFLLALFLVLLVLGCEVQA), serve as a signal peptide directing secretion. Residues 66 to 74 (SVDEKLRDM) are lipid binding. The lipoprotein lipase cofactor stretch occupies residues 78 to 100 (SSAAMTTYASIFTDQIFTLLKGE).

Belongs to the apolipoprotein C2 family. In terms of processing, proapolipoprotein C-II is synthesized as a sialic acid containing glycoprotein which is subsequently desialylated prior to its proteolytic processing. Post-translationally, proapolipoprotein C-II, the major form found in plasma undergoes proteolytic cleavage of its N-terminal hexapeptide to generate the mature form apolipoprotein C-II, which occurs as the minor form in plasma.

The protein resides in the secreted. Functionally, component of chylomicrons, very low-density lipoproteins (VLDL), low-density lipoproteins (LDL), and high-density lipoproteins (HDL) in plasma. Plays an important role in lipoprotein metabolism as an activator of lipoprotein lipase. This is Apolipoprotein C-II (APOC2) from Bramus lutescens (Transcaucasian mole vole).